We begin with the raw amino-acid sequence, 864 residues long: NT-3 growth factor receptor (864 aa).

An N-terminal signal peptide occupies residues 1 to 31 (MDVSLCPAKCSFWRIFLLGSVWLDYVGSVLA). 2 disulfide bridges follow: C32–C38 and C36–C45. The Extracellular portion of the chain corresponds to 32 to 429 (CPANCVCSKT…TVTHKPEEDT (398 aa)). Residues N68, N72, and N79 are each glycosylated (N-linked (GlcNAc...) asparagine). 2 LRR repeats span residues 104–125 (GLQK…AFAK) and 128–149 (HLRY…LFQT). N133 and N163 each carry an N-linked (GlcNAc...) asparagine glycan. In terms of domain architecture, LRRCT spans 160–209 (NFFNCSCDIRWMQLWQEQGEARLDSQSLYCISADGSQLPLFRMNISQCDL). Cystine bridges form between C164/C189 and C166/C207. N-linked (GlcNAc...) asparagine glycans are attached at residues N203, N218, N232, N259, N267, N272, and N294. Ig-like C2-type domains lie at 210 to 300 (PEIS…VALT) and 309 to 382 (SLVE…IAKN). A disulfide bridge connects residues C231 and C284. A disulfide bridge connects residues C320 and C362. N375 and N388 each carry an N-linked (GlcNAc...) asparagine glycan. A helical transmembrane segment spans residues 430 to 453 (FGVSIAVGLAAFACVLLVVLFIMI). The Cytoplasmic segment spans residues 454-864 (NKYGRRSKFG…ATPIYLDILG (411 aa)). S493 carries the post-translational modification Phosphoserine. Y516 carries the phosphotyrosine; by autocatalysis modification. The region spanning 538 to 853 (IVLKRELGEG…EIYKILHALG (316 aa)) is the Protein kinase domain. Residues 544 to 552 (LGEGAFGKV) and K572 each bind ATP. Residue D679 is the Proton acceptor of the active site. 4 positions are modified to phosphotyrosine; by autocatalysis: Y705, Y709, Y710, and Y859.

Belongs to the protein kinase superfamily. Tyr protein kinase family. Insulin receptor subfamily. In terms of assembly, exists in a dynamic equilibrium between monomeric (low affinity) and dimeric (high affinity) structures. Binds SH2B2. Interacts with SQSTM1 and KIDINS220. Interacts with PTPRS. Interacts with MAPK8IP3/JIP3. Ligand-mediated auto-phosphorylation. As to expression, widely expressed, mainly in the nervous tissue.

It localises to the membrane. The catalysed reaction is L-tyrosyl-[protein] + ATP = O-phospho-L-tyrosyl-[protein] + ADP + H(+). Functionally, receptor tyrosine kinase involved in nervous system and probably heart development. Upon binding of its ligand NTF3/neurotrophin-3, NTRK3 autophosphorylates and activates different signaling pathways, including the phosphatidylinositol 3-kinase/AKT and the MAPK pathways, that control cell survival and differentiation. NTRK3 isoforms containing insertions within the kinase domain can autophosphorylate in response to NTF3/neurotrophin-3, but cannot mediate downstream phenotypic responses. The chain is NT-3 growth factor receptor (Ntrk3) from Rattus norvegicus (Rat).